We begin with the raw amino-acid sequence, 543 residues long: Chaperonin GroEL 2 (543 aa).

ATP is bound by residues 29–32 (TLGP), 86–90 (DGTTT), glycine 413, 477–479 (DAA), and aspartate 493. The interval 523–543 (PQEPEPAAGGHGHGHQHGPGF) is disordered. Basic residues predominate over residues 534 to 543 (GHGHQHGPGF).

It belongs to the chaperonin (HSP60) family. Forms a cylinder of 14 subunits composed of two heptameric rings stacked back-to-back. Interacts with the co-chaperonin GroES.

The protein resides in the cytoplasm. The enzyme catalyses ATP + H2O + a folded polypeptide = ADP + phosphate + an unfolded polypeptide.. Together with its co-chaperonin GroES, plays an essential role in assisting protein folding. The GroEL-GroES system forms a nano-cage that allows encapsulation of the non-native substrate proteins and provides a physical environment optimized to promote and accelerate protein folding. This is Chaperonin GroEL 2 from Salinispora tropica (strain ATCC BAA-916 / DSM 44818 / JCM 13857 / NBRC 105044 / CNB-440).